We begin with the raw amino-acid sequence, 1444 residues long: Rho GTPase-activating protein 31 (1444 aa).

In terms of domain architecture, Rho-GAP spans 21–216 (CDLTEYLESS…FILNHVDQIF (196 aa)). Ser272 carries the phosphoserine modification. Thr286 is modified (phosphothreonine). Ser346, Ser349, and Ser387 each carry phosphoserine. Residues 398 to 427 (WGQEGMPPGAEGGFDVSSDRSHLQGAQARP) are disordered. A Phosphoserine modification is found at Ser476. The disordered stretch occupies residues 504–631 (TNSTPCRTPP…ESSTLQESPR (128 aa)). Low complexity predominate over residues 515-534 (ELQSLSSLEEFSFHGSESGG). Residues 600–619 (NELEKRPNPEKVVEEGREAG) are compositionally biased toward basic and acidic residues. Thr679 carries the phosphothreonine modification. Disordered stretches follow at residues 688 to 893 (SSLG…EDDT) and 906 to 1108 (EPWE…SSLN). A phosphoserine mark is found at Ser701 and Ser712. Polar residues predominate over residues 722–734 (PANQSTQGASTAA). Residues 735 to 745 (SREKPEPEQGL) show a composition bias toward basic and acidic residues. Residues 777-790 (LSPPLPPAPPPPTP) are compositionally biased toward pro residues. Ser778 bears the Phosphoserine mark. At Thr789 the chain carries Phosphothreonine. The segment covering 803 to 817 (GPEREDSSRKLRTDL) has biased composition (basic and acidic residues). A compositionally biased stretch (polar residues) spans 822–834 (LKSQDSPEISSLC). Over residues 839 to 848 (ATPRHSDKQN) the composition is skewed to basic and acidic residues. Residues 960 to 977 (TVKSQWTLEVPSSSSCAN) are compositionally biased toward polar residues. At Ser974 the chain carries Phosphoserine. The segment covering 992–1008 (PRREITGWDEKALRSFR) has biased composition (basic and acidic residues). Polar residues predominate over residues 1028-1038 (VQPNPAETSPI). The segment covering 1064-1075 (GPESSKESSPSV) has biased composition (low complexity). A phosphoserine mark is found at Ser1105, Ser1106, and Ser1178. Polar residues-rich tracts occupy residues 1211–1224 (QIPQPLPSQSSGEN) and 1234–1245 (EGPSSTSGTTQK). The tract at residues 1211–1346 (QIPQPLPSQS…HRSRPGRPQS (136 aa)) is disordered. Positions 1246–1265 (PAKDDSPSSLESSKEEKPKQ) are enriched in basic and acidic residues. 2 stretches are compositionally biased toward polar residues: residues 1292–1303 (PGSSNLLSTQDA) and 1314–1323 (TEPSGDNLLS).

Interacts with ITSN1, which inhibits GAP activity. Interacts with PARVA. Interacts with GTP-loaded RHOU. Phosphorylation on Thr-789 reduces GAP activity.

It localises to the cell projection. The protein resides in the lamellipodium. The protein localises to the cell junction. It is found in the focal adhesion. Functions as a GTPase-activating protein (GAP) for RAC1 and CDC42. Required for cell spreading, polarized lamellipodia formation and cell migration. This chain is Rho GTPase-activating protein 31 (ARHGAP31), found in Homo sapiens (Human).